The chain runs to 666 residues: tRNA 5-methylaminomethyl-2-thiouridine biosynthesis bifunctional protein MnmC (666 aa).

The segment at 1 to 245 is tRNA (mnm(5)s(2)U34)-methyltransferase; the sequence is MKQYAIQPAT…KREMLCGVME (245 aa). Positions 270–666 are FAD-dependent cmnm(5)s(2)U34 oxidoreductase; that stretch reads IGGGIASALL…RKLLKGKAVK (397 aa).

It in the N-terminal section; belongs to the methyltransferase superfamily. tRNA (mnm(5)s(2)U34)-methyltransferase family. The protein in the C-terminal section; belongs to the DAO family. The cofactor is FAD.

It is found in the cytoplasm. It carries out the reaction 5-aminomethyl-2-thiouridine(34) in tRNA + S-adenosyl-L-methionine = 5-methylaminomethyl-2-thiouridine(34) in tRNA + S-adenosyl-L-homocysteine + H(+). In terms of biological role, catalyzes the last two steps in the biosynthesis of 5-methylaminomethyl-2-thiouridine (mnm(5)s(2)U) at the wobble position (U34) in tRNA. Catalyzes the FAD-dependent demodification of cmnm(5)s(2)U34 to nm(5)s(2)U34, followed by the transfer of a methyl group from S-adenosyl-L-methionine to nm(5)s(2)U34, to form mnm(5)s(2)U34. In Salmonella paratyphi A (strain ATCC 9150 / SARB42), this protein is tRNA 5-methylaminomethyl-2-thiouridine biosynthesis bifunctional protein MnmC.